The sequence spans 78 residues: Biotin synthase auxiliary protein (78 aa).

The protein belongs to the BsaP family. It depends on iron-sulfur cluster as a cofactor.

Its function is as follows. Required for the activity of the biotin synthase BioB. This is Biotin synthase auxiliary protein from Mycolicibacterium smegmatis (strain ATCC 700084 / mc(2)155) (Mycobacterium smegmatis).